The chain runs to 161 residues: Zinc metalloproteinase/disintegrin (161 aa).

The Peptidase M12B domain maps to 1 to 72; sequence ERDLLVAVTM…ENPQCILNKH (72 aa). His12 serves as a coordination point for Zn(2+). The active site involves Glu13. The Zn(2+) site is built by His16 and His22. Cystine bridges form between Cys27-Cys51 and Cys29-Cys34. Positions 73–88 are excised as a propeptide; sequence LRTDTVSTPVSGNELL. The Disintegrin domain occupies 89–161; sequence EAGEECDCGT…ADCPRNRFHA (73 aa). 6 disulfides stabilise this stretch: Cys94–Cys109, Cys96–Cys104, Cys103–Cys126, Cys117–Cys123, Cys122–Cys147, and Cys135–Cys154. The Cell attachment site signature appears at 139-141; sequence RGD.

The protein belongs to the venom metalloproteinase (M12B) family. P-II subfamily. P-IIa sub-subfamily. Monomer. Expressed by the venom gland.

The protein resides in the secreted. Functionally, impairs hemostasis in the envenomed animal. In terms of biological role, disintegrin: inhibit platelet aggregation induced by ADP, thrombin, platelet-activating factor and collagen. Acts by inhibiting fibrinogen interaction with platelet receptors GPIIb/GPIIIa (ITGA2B/ITGB3). The protein is Zinc metalloproteinase/disintegrin of Bothrops jararaca (Jararaca).